We begin with the raw amino-acid sequence, 260 residues long: Endomucin (260 aa).

The first 18 residues, 1–18 (MELLQVTILFLLPSICSS), serve as a signal peptide directing secretion. Residues Asn19, Asn28, Asn97, and Asn103 are each glycosylated (N-linked (GlcNAc...) asparagine). Residues 19–189 (NSTGVLEAAN…TSATSRSYSS (171 aa)) lie on the Extracellular side of the membrane. Composition is skewed to polar residues over residues 119–133 (QSSK…SIKT) and 145–170 (ASPS…SQVI). The segment at 119–182 (QSSKPKTETQ…EGGKNASTSA (64 aa)) is disordered. N-linked (GlcNAc...) asparagine glycans are attached at residues Asn163 and Asn177. A helical membrane pass occupies residues 190 to 210 (IILPVVIALIVITLSVFVLVG). Topologically, residues 211-260 (LYRMCWKADPGTPENGNDQPQSDKESVKLLTVKTISHESGEHSAQGKTKN) are cytoplasmic. At Ser236 the chain carries Phosphoserine.

In terms of processing, highly O-glycosylated. Sialic acid-rich glycoprotein.

It is found in the membrane. Functionally, endothelial sialomucin, also called endomucin or mucin-like sialoglycoprotein, which interferes with the assembly of focal adhesion complexes and inhibits interaction between cells and the extracellular matrix. The chain is Endomucin (EMCN) from Pongo abelii (Sumatran orangutan).